The chain runs to 288 residues: ATP synthase gamma chain (288 aa).

Belongs to the ATPase gamma chain family. In terms of assembly, F-type ATPases have 2 components, CF(1) - the catalytic core - and CF(0) - the membrane proton channel. CF(1) has five subunits: alpha(3), beta(3), gamma(1), delta(1), epsilon(1). CF(0) has three main subunits: a, b and c.

The protein localises to the cell inner membrane. Functionally, produces ATP from ADP in the presence of a proton gradient across the membrane. The gamma chain is believed to be important in regulating ATPase activity and the flow of protons through the CF(0) complex. The sequence is that of ATP synthase gamma chain from Acidovorax ebreus (strain TPSY) (Diaphorobacter sp. (strain TPSY)).